The primary structure comprises 296 residues: Polyamine aminopropyltransferase (296 aa).

Residues 16-251 (HLWYFEYYTG…GMWSYTFASK (236 aa)) form the PABS domain. Q46 contacts S-methyl-5'-thioadenosine. Spermidine-binding residues include H77 and D101. S-methyl-5'-thioadenosine is bound by residues E121 and 152–153 (NG). D170 functions as the Proton acceptor in the catalytic mechanism. Spermidine is bound at residue 170–173 (DSTD).

Belongs to the spermidine/spermine synthase family. In terms of assembly, homodimer or homotetramer.

It is found in the cytoplasm. It catalyses the reaction S-adenosyl 3-(methylsulfanyl)propylamine + putrescine = S-methyl-5'-thioadenosine + spermidine + H(+). Its pathway is amine and polyamine biosynthesis; spermidine biosynthesis; spermidine from putrescine: step 1/1. In terms of biological role, catalyzes the irreversible transfer of a propylamine group from the amino donor S-adenosylmethioninamine (decarboxy-AdoMet) to putrescine (1,4-diaminobutane) to yield spermidine. This chain is Polyamine aminopropyltransferase, found in Thermotoga neapolitana (strain ATCC 49049 / DSM 4359 / NBRC 107923 / NS-E).